The sequence spans 739 residues: Phosphoribosylformylglycinamidine synthase subunit PurL (739 aa).

Histidine 54 is an active-site residue. Residues tyrosine 57 and lysine 96 each coordinate ATP. Residue glutamate 98 coordinates Mg(2+). Substrate is bound by residues 99 to 102 and arginine 121; that span reads SHNH. Histidine 100 (proton acceptor) is an active-site residue. Position 122 (aspartate 122) interacts with Mg(2+). Position 245 (glutamine 245) interacts with substrate. Residue aspartate 273 coordinates Mg(2+). 317–319 provides a ligand contact to substrate; sequence ESQ. The ATP site is built by aspartate 500 and glycine 537. Asparagine 538 is a binding site for Mg(2+). Serine 540 contributes to the substrate binding site.

Belongs to the FGAMS family. As to quaternary structure, monomer. Part of the FGAM synthase complex composed of 1 PurL, 1 PurQ and 2 PurS subunits.

The protein localises to the cytoplasm. The enzyme catalyses N(2)-formyl-N(1)-(5-phospho-beta-D-ribosyl)glycinamide + L-glutamine + ATP + H2O = 2-formamido-N(1)-(5-O-phospho-beta-D-ribosyl)acetamidine + L-glutamate + ADP + phosphate + H(+). The protein operates within purine metabolism; IMP biosynthesis via de novo pathway; 5-amino-1-(5-phospho-D-ribosyl)imidazole from N(2)-formyl-N(1)-(5-phospho-D-ribosyl)glycinamide: step 1/2. In terms of biological role, part of the phosphoribosylformylglycinamidine synthase complex involved in the purines biosynthetic pathway. Catalyzes the ATP-dependent conversion of formylglycinamide ribonucleotide (FGAR) and glutamine to yield formylglycinamidine ribonucleotide (FGAM) and glutamate. The FGAM synthase complex is composed of three subunits. PurQ produces an ammonia molecule by converting glutamine to glutamate. PurL transfers the ammonia molecule to FGAR to form FGAM in an ATP-dependent manner. PurS interacts with PurQ and PurL and is thought to assist in the transfer of the ammonia molecule from PurQ to PurL. In Bacillus cereus (strain ATCC 14579 / DSM 31 / CCUG 7414 / JCM 2152 / NBRC 15305 / NCIMB 9373 / NCTC 2599 / NRRL B-3711), this protein is Phosphoribosylformylglycinamidine synthase subunit PurL.